Consider the following 139-residue polypeptide: Small capsomere-interacting protein (139 aa).

Positions 100–120 (SLTTPSLSSTPTSLTSMPGLS) are enriched in low complexity. Residues 100 to 139 (SLTTPSLSSTPTSLTSMPGLSISGPSTTDTIDSKKKPKAK) are disordered.

The protein belongs to the herpesviridae small capsomere-interacting protein family. As to quaternary structure, interacts with the major capsid protein/MCP.

It is found in the virion. Its subcellular location is the host nucleus. Participates in the assembly of the infectious particles by decorating the outer surface of the capsid shell and thus forming a layer between the capsid and the tegument. Complexes composed of the major capsid protein and small capsomere-interacting protein/SCP assemble together in the host cytoplasm and are translocated to the nucleus, where they accumulate and participate in capsid assembly. The sequence is that of Small capsomere-interacting protein from Saimiri sciureus (Common squirrel monkey).